A 361-amino-acid chain; its full sequence is Histidine biosynthesis bifunctional protein HisB (361 aa).

Positions 1 to 172 (MSQPTLFIDR…PKTTACERPP (172 aa)) are histidinol-phosphatase. The active-site Nucleophile is Asp-9. Residues Asp-9 and Asp-11 each contribute to the Mg(2+) site. Asp-11 functions as the Proton donor in the catalytic mechanism. Zn(2+) is bound by residues Cys-92, His-94, Cys-100, and Cys-102. Position 129 (Asp-129) interacts with Mg(2+). Positions 173-361 (RYAEVVRTTK…NELPSSKGVL (189 aa)) are imidazoleglycerol-phosphate dehydratase.

It in the N-terminal section; belongs to the histidinol-phosphatase family. The protein in the C-terminal section; belongs to the imidazoleglycerol-phosphate dehydratase family. Mg(2+) serves as cofactor. The cofactor is Zn(2+).

It localises to the cytoplasm. It catalyses the reaction D-erythro-1-(imidazol-4-yl)glycerol 3-phosphate = 3-(imidazol-4-yl)-2-oxopropyl phosphate + H2O. It carries out the reaction L-histidinol phosphate + H2O = L-histidinol + phosphate. Its pathway is amino-acid biosynthesis; L-histidine biosynthesis; L-histidine from 5-phospho-alpha-D-ribose 1-diphosphate: step 6/9. It participates in amino-acid biosynthesis; L-histidine biosynthesis; L-histidine from 5-phospho-alpha-D-ribose 1-diphosphate: step 8/9. The chain is Histidine biosynthesis bifunctional protein HisB from Actinobacillus pleuropneumoniae serotype 7 (strain AP76).